Reading from the N-terminus, the 78-residue chain is Acyl carrier protein (78 aa).

The Carrier domain maps to 1–76 (MSVAEKVKEI…DAISFIEKKK (76 aa)). Position 36 is an O-(pantetheine 4'-phosphoryl)serine (Ser-36).

Belongs to the acyl carrier protein (ACP) family. Post-translationally, 4'-phosphopantetheine is transferred from CoA to a specific serine of apo-ACP by AcpS. This modification is essential for activity because fatty acids are bound in thioester linkage to the sulfhydryl of the prosthetic group.

The protein localises to the cytoplasm. It participates in lipid metabolism; fatty acid biosynthesis. Carrier of the growing fatty acid chain in fatty acid biosynthesis. The chain is Acyl carrier protein from Solidesulfovibrio magneticus (strain ATCC 700980 / DSM 13731 / RS-1) (Desulfovibrio magneticus).